The chain runs to 227 residues: Probable 2-phosphosulfolactate phosphatase (227 aa).

This sequence belongs to the ComB family. Mg(2+) serves as cofactor.

The enzyme catalyses (2R)-O-phospho-3-sulfolactate + H2O = (2R)-3-sulfolactate + phosphate. The chain is Probable 2-phosphosulfolactate phosphatase from Thermotoga petrophila (strain ATCC BAA-488 / DSM 13995 / JCM 10881 / RKU-1).